A 719-amino-acid polypeptide reads, in one-letter code: DNA replication licensing factor MCM7 (719 aa).

An N-acetylalanine modification is found at Ala-2. Glycyl lysine isopeptide (Lys-Gly) (interchain with G-Cter in SUMO2) cross-links involve residues Lys-15 and Lys-28. A phosphoserine mark is found at Ser-121 and Ser-314. Residues 332-538 form the MCM domain; that stretch reads FYEKLAASIA…NDLRLAQHIT (207 aa). Residue Tyr-345 participates in ATP binding. Ser-365 is modified (phosphoserine). The ATP site is built by Gly-384, Ala-386, Lys-387, Ser-388, and Asn-489. Phosphoserine is present on Ser-500. The Arginine finger signature appears at 513-516; sequence SRFD. Residue Arg-514 participates in ATP binding. The interaction with RAD17 stretch occupies residues 521–564; sequence IQDRPDRDNDLRLAQHITYVHQHSRQPPAQFEPLDMKLMRRYIA. An interaction with ATRIP region spans residues 577-719; the sequence is LADYITAAYV…NTARTRITFV (143 aa). Arg-604 serves as a coordination point for ATP. The residue at position 678 (Ser-678) is a Phosphoserine.

The protein belongs to the MCM family. As to quaternary structure, component of the MCM2-7 complex. The complex forms a toroidal hexameric ring with the proposed subunit order MCM2-MCM6-MCM4-MCM7-MCM3-MCM5. Component of the CMG helicase complex, a hexameric ring of related MCM2-7 subunits stabilized by CDC45 and the tetrameric GINS complex. Interacts with the ATR-ATRIP complex and with RAD17. Interacts with TIPIN. Interacts with MCMBP. Interacts with ANKRD17. Component of the replisome complex composed of at least DONSON, MCM2, MCM7, PCNA and TICRR. Post-translationally, O-glycosylated (O-GlcNAcylated), in a cell cycle-dependent manner. In terms of processing, ubiquitinated by ECS(LRR1) E3 ubiquitin-protein ligase complex when forks converge following formation of DNA interstrand cross-links. During mitosis, ubiquitinated by TRAIP when forks converge following formation of DNA interstrand cross-links. Short ubiquitin chains on MCM7 promote recruitment of DNA glycosylase NEIL3. If the interstrand cross-link cannot be cleaved by NEIL3, the ubiquitin chains continue to grow on MCM7, promoting the unloading of the CMG helicase complex by the VCP/p97 ATPase.

It is found in the nucleus. The protein resides in the chromosome. The catalysed reaction is ATP + H2O = ADP + phosphate + H(+). In terms of biological role, acts as a component of the MCM2-7 complex (MCM complex) which is the replicative helicase essential for 'once per cell cycle' DNA replication initiation and elongation in eukaryotic cells. Core component of CDC45-MCM-GINS (CMG) helicase, the molecular machine that unwinds template DNA during replication, and around which the replisome is built. The active ATPase sites in the MCM2-7 ring are formed through the interaction surfaces of two neighboring subunits such that a critical structure of a conserved arginine finger motif is provided in trans relative to the ATP-binding site of the Walker A box of the adjacent subunit. The six ATPase active sites, however, are likely to contribute differentially to the complex helicase activity. Required for S-phase checkpoint activation upon UV-induced damage. This is DNA replication licensing factor MCM7 (MCM7) from Bos taurus (Bovine).